The sequence spans 351 residues: MTAHIAPATVPPSAPAAAGQDPAALLAHARREVLEAGRGLDEAGVLAVLRLPDEYLGDALALAHEVRMRWCGPEVEVEGIISLKTGGCPEDCHFCSQSGKFDSPVRSAWLDVPSLVEAARQTAATGATEFCIVAAVRGPDARLMSQVREGVAAIRAAVDINVACSLGMLTQDQVDELTAIGVHRYNHNLETSRSHFPKVVTTHSWEERWETCEMVRAAGMELCCGAILGVGESLEQRAELAAQLAVLEPDEVPLNFLNPRPGTPFGDYPPVQPRDALRAIAAFRLALPRTILRYSGGREITLGDLEAQGMLGGINAVIVGNYLTTLGRPAESDLKMLADLSMPIKSLQATL.

The 226-residue stretch at proline 73–arginine 298 folds into the Radical SAM core domain. [4Fe-4S] cluster contacts are provided by cysteine 88, cysteine 92, and cysteine 95. Residues cysteine 131, cysteine 164, cysteine 223, and arginine 293 each coordinate [2Fe-2S] cluster.

This sequence belongs to the radical SAM superfamily. Biotin synthase family. Homodimer. It depends on [4Fe-4S] cluster as a cofactor. [2Fe-2S] cluster serves as cofactor.

The catalysed reaction is (4R,5S)-dethiobiotin + (sulfur carrier)-SH + 2 reduced [2Fe-2S]-[ferredoxin] + 2 S-adenosyl-L-methionine = (sulfur carrier)-H + biotin + 2 5'-deoxyadenosine + 2 L-methionine + 2 oxidized [2Fe-2S]-[ferredoxin]. The protein operates within cofactor biosynthesis; biotin biosynthesis; biotin from 7,8-diaminononanoate: step 2/2. Its function is as follows. Catalyzes the conversion of dethiobiotin (DTB) to biotin by the insertion of a sulfur atom into dethiobiotin via a radical-based mechanism. This Frankia alni (strain DSM 45986 / CECT 9034 / ACN14a) protein is Biotin synthase.